The chain runs to 1440 residues: MAGIIKKQILKHLSRFTKNLSPDKINLSTLKGEGQLTNLELDEEVLQNVLELPTWLAITRVYCNRASIRIQWTKLKTHPICLCLDKVEVEMKTCEDPRPPNGQSPIALASGQSEYGFAEKVVEGMFIIVNSITIKIHSKAFHASFELWQLQGYSVNPNWQQSDLRLTRITDPCRGEVLTFKEITWQTLRIEADATDNGDQDPVTTPLRLITNQGRIQIALKRRTKDCNVISSKLMFLLDDLLWVLTDSQLKAMMKYAESLSEAMEKSAHQRKSLAPEPVQITPPAPSAQQSWAQAFGGSQGNSNSSSSRLSQYFEKFDVKESSYHLLISRLDLHICDDSQSREPGVSANRLMGGAMQLTFRKMAFDYYPFHWAGDSCKHWVRHCEAMETRGQWAQKLVMEFQSKMEKWHEETGLKPPWHLGVDSLFRRKADSLSSPRKNPLERSPSQGRQPAFQPPAWNRLRSSCMVVRVDDLDIHQVSTAGQPSKKPSTLLSCSRKLHNLPTQVSAIHIEFTEYYFPDNQELPVPCPNLYIQLNGLTFTMDPVSLLWGNLFCLDLYRSLEQFKAIYKLEDSSQKDEHLDIRLDAFWLKVSFPLEKRERAELHRPQALVFSASGMIATNTRHAPHCSCSDLQSLFRGFAAAEFFHSNYDHFPKVPGGFSLLHMLFLHHAFQMDSCLPQPNTLPPQRPKASWDLWSVHFTQISLDFEGTENFKGHTLNFVAPFPLSIWACLPLRWQQAQARKLLLASEGRLKPSASFGSPVQSEALAPDSMSHPRSKTEHDLKSLSGLTEVMEILKEGSSGMDNKGPLTELEDVADVHMLVHSPAHVRVRLDHYQYLALLRLKEVLQRLQEQLTKDTESMTGSPLQNQTACIGVLFPSAEVALLMHPAPGAVDADSAGSDSTSLVDSELSPSEDRELKSDASSDQGPASPEKVLEESSIENQDVSQERPHSNGELQDSGPLAQQLAGKGHEAVESLQAKKLSRTQASSSPAALKPPAGRETAVNGQGELIPLKNIEGELSSAIHMTKDATKEALHATMDLTKEAVSLTKDAFSLGRDRMTSTMHKMLSLPPAKEPMAKTDEGVAAPVSGGAARLRFFSMKRTVSQQSFDGVSLDSSGPEDRISVDSDGSDSFVMLLESESGPESVPPGSLSNVSDNAGVQGSPLVNNYGQGSPAANSSVSPSGEDLIFHPVSVLVLKVNEVSFGIEVRGEDLTVALQAEELTLQQLGTVGLWQFLHGQCPGTCFQESSTLKTGHIRPAVGLRFEVGPGAAVHSPLASQNGFLHLLLHGCDLELLTSVLSGLGPFLEDEEIPVVVPMQIELLNSSITLKDDIPPIYPTSPGPIPITLAMEHVVLKRSDDGVFHIGAAAQDKPSAEVLKSEKRQPPKEQVFLVPTGEVFEQQVKELPILQKELIETKQALANANQDKEKLLQEIRKYNPFFEL.

Positions 3–95 (GIIKKQILKH…KVEVEMKTCE (93 aa)) constitute a Chorein N-terminal domain. 3 disordered regions span residues 267 to 307 (SAHQ…NSSS), 430 to 456 (ADSLSSPRKNPLERSPSQGRQPAFQPP), and 751 to 780 (KPSASFGSPVQSEALAPDSMSHPRSKTEHD). Residues 287 to 307 (SAQQSWAQAFGGSQGNSNSSS) show a composition bias toward low complexity. Phosphoserine is present on residues Ser-444, Ser-446, Ser-755, and Ser-758. The stretch at 837 to 860 (ALLRLKEVLQRLQEQLTKDTESMT) forms a coiled coil. The tract at residues 891–1008 (VDADSAGSDS…ETAVNGQGEL (118 aa)) is disordered. Over residues 911–920 (SEDRELKSDA) the composition is skewed to basic and acidic residues. Residues 985–995 (ASSSPAALKPP) show a composition bias toward low complexity. Ser-988, Ser-1103, and Ser-1106 each carry phosphoserine. A disordered region spans residues 1106-1180 (SFDGVSLDSS…SPAANSSVSP (75 aa)). Over residues 1134–1150 (LLESESGPESVPPGSLS) the composition is skewed to low complexity. Polar residues predominate over residues 1151 to 1180 (NVSDNAGVQGSPLVNNYGQGSPAANSSVSP). Residues 1401–1435 (KELPILQKELIETKQALANANQDKEKLLQEIRKYN) adopt a coiled-coil conformation.

As to quaternary structure, homodimer (Potential). Interacts with UHRF1.

It localises to the late endosome. Tube-forming lipid transport protein which probably mediates the transfer of lipids between membranes at organelle contact sites. May be involved in the retrograde traffic of vesicle clusters in the endocytic pathway to the Golgi complex. The protein is Bridge-like lipid transfer protein family member 3A of Homo sapiens (Human).